Consider the following 405-residue polypeptide: Tryptophan synthase beta chain (405 aa).

An N6-(pyridoxal phosphate)lysine modification is found at Lys-98.

This sequence belongs to the TrpB family. In terms of assembly, tetramer of two alpha and two beta chains. Requires pyridoxal 5'-phosphate as cofactor.

It catalyses the reaction (1S,2R)-1-C-(indol-3-yl)glycerol 3-phosphate + L-serine = D-glyceraldehyde 3-phosphate + L-tryptophan + H2O. The protein operates within amino-acid biosynthesis; L-tryptophan biosynthesis; L-tryptophan from chorismate: step 5/5. The beta subunit is responsible for the synthesis of L-tryptophan from indole and L-serine. The polypeptide is Tryptophan synthase beta chain (Stenotrophomonas maltophilia (strain R551-3)).